The chain runs to 48 residues: Large ribosomal subunit protein bL33B (48 aa).

Belongs to the bacterial ribosomal protein bL33 family.

The sequence is that of Large ribosomal subunit protein bL33B from Lactococcus lactis subsp. cremoris (strain MG1363).